Consider the following 1892-residue polypeptide: Sodium channel protein type 4 subunit alpha A (1892 aa).

At 1-125 the chain is on the cytoplasmic side; it reads MATILPPPGT…RGAIKILIHS (125 aa). The disordered stretch occupies residues 34-54; it reads APKAGAHEEEEPPTPNPDLEA. The stretch at 107–433 is one I repeat; it reads ILSPFSLVRR…VVAMAYDEQN (327 aa). A helical transmembrane segment spans residues 126–144; the sequence is LFSTLIMITILSNCVFMTM. The Extracellular segment spans residues 145–151; that stretch reads SNPPAWS. The helical transmembrane segment at 152–172 threads the bilayer; it reads KTVEYVFTGIYTFEATVKVLS. Topologically, residues 173-186 are cytoplasmic; it reads RGFCVGPFTFLRDP. A helical transmembrane segment spans residues 187-204; that stretch reads WNWLDFMVISMAYITEFV. Residues 205-210 lie on the Extracellular side of the membrane; that stretch reads DLGNVS. N-linked (GlcNAc...) asparagine glycosylation is present at asparagine 208. The chain crosses the membrane as a helical span at residues 211–227; the sequence is ALRTFRVLRALKTITVI. The Cytoplasmic portion of the chain corresponds to 228–246; it reads PGLKTIVAALIQSVKKMVD. Residues 247–266 form a helical membrane-spanning segment; it reads VMILTVFALAVFALVGLQLF. Over 267 to 370 the chain is Extracellular; it reads MGNLRHKCIR…PNYGYTSFDS (104 aa). An intrachain disulfide couples cysteine 274 to cysteine 339. Asparagine 281, asparagine 294, and asparagine 341 each carry an N-linked (GlcNAc...) asparagine glycan. Cysteine 348 and cysteine 354 are oxidised to a cystine. The segment at residues 371-395 is an intramembrane region (pore-forming); it reads FGWAFLALFRLMTQDNWESLFQLTL. Residues 396–402 lie on the Extracellular side of the membrane; it reads RAAGQTY. The chain crosses the membrane as a helical span at residues 403–423; it reads MLFFVVVIFLGSFYLINLILA. Residues 424-612 lie on the Cytoplasmic side of the membrane; that stretch reads VVAMAYDEQN…KWVHFVVMDP (189 aa). One copy of the II repeat lies at 594 to 866; the sequence is CCEKWVVFKK…QIAIGRITRG (273 aa). A helical transmembrane segment spans residues 613–631; that stretch reads FVDLAITICIVLNTLFMAM. Residues 632–642 are Extracellular-facing; sequence EHYPMTEEFDY. A helical membrane pass occupies residues 643 to 662; that stretch reads MLSVGNLVFTGIFAAEMFFK. Over 663 to 676 the chain is Cytoplasmic; that stretch reads LIAMDPYYYFQVGW. Residues 677-696 form a helical membrane-spanning segment; that stretch reads NIFDSIIVTLSLVELGLANV. Topologically, residues 697–698 are extracellular; the sequence is QG. The helical transmembrane segment at 699-716 threads the bilayer; sequence LSVLRSFRLLRVFKLAKS. Topologically, residues 717 to 732 are cytoplasmic; the sequence is WPTLNMLIKIIGNSVG. Residues 733–751 form a helical membrane-spanning segment; the sequence is ALGNLTLVLAIIVFIFAVV. The Extracellular portion of the chain corresponds to 752-780; the sequence is GMQLFGKSYKDCVCKISSDCELPRWHMND. The cysteines at positions 765 and 771 are disulfide-linked. An intramembrane region (pore-forming) is located at residues 781-801; sequence FFHSFLIVFRILCGEWIETMW. Residues 802–812 are Extracellular-facing; that stretch reads DCMEVAGAGMC. An intrachain disulfide couples cysteine 803 to cysteine 812. Residues 813–831 traverse the membrane as a helical segment; sequence LVVFMMVMVIGNLVVLNLF. Residues 832–1071 are Cytoplasmic-facing; that stretch reads LALLLSSFSG…TCFTIVEHDW (240 aa). Disordered stretches follow at residues 884–905 and 945–982; these read REPQ…TEGM and LGES…GVED. A compositionally biased stretch (acidic residues) spans 948–971; that stretch reads SDSENPSEDDDDQEDDVDSEVTCE. The III repeat unit spans residues 1052 to 1366; that stretch reads KGKKWWNLRK…KKYYEAMKKL (315 aa). Residues 1072 to 1089 form a helical membrane-spanning segment; that stretch reads FETFIIFMILLSSGALAF. Over 1090-1102 the chain is Extracellular; that stretch reads EDIYIERRRTVKI. The chain crosses the membrane as a helical span at residues 1103–1121; sequence VLEFADKVFTFIFVIEMLL. Topologically, residues 1122–1135 are cytoplasmic; that stretch reads KWVAYGFKTYFTNA. A helical membrane pass occupies residues 1136–1154; the sequence is WCWLDFFIVDISLISLSAN. The Extracellular portion of the chain corresponds to 1155–1162; that stretch reads LMGFSDLG. A helical transmembrane segment spans residues 1163 to 1181; it reads PIKSLRTLRALRPLRALSR. Residues 1182–1198 are Cytoplasmic-facing; it reads FEGMRVVVNALIGAIPS. Residues 1199–1218 form a helical membrane-spanning segment; the sequence is IFNVLLVCLIFWLIFSIMGV. Residues 1219 to 1270 lie on the Extracellular side of the membrane; sequence NLFAGKFYRCINTTTAELFPISVVNNKSDCVALQEATQEARWVNVKVNYDNV. A disulfide bridge connects residues cysteine 1228 and cysteine 1248. Residues asparagine 1230 and asparagine 1244 are each glycosylated (N-linked (GlcNAc...) asparagine). The pore-forming intramembrane region spans 1271–1292; it reads AKGYLSLLQIATFKGWMDIMYP. Residues 1293-1309 lie on the Extracellular side of the membrane; it reads AVDSREVEEQPSYEINL. The chain crosses the membrane as a helical span at residues 1310–1331; that stretch reads YMYIYFVIFIIFGSFFTLNLFI. Topologically, residues 1332–1394 are cytoplasmic; the sequence is GVIIDNFNQQ…LVFDFISQQF (63 aa). The segment at 1350-1352 is important for rapid channel inactivation; it reads IFM. An IV repeat occupies 1375 to 1673; that stretch reads IPRPANLIQG…WEKFDTGGTQ (299 aa). A helical membrane pass occupies residues 1395–1412; that stretch reads FDIFIMVLICLNMVTMMV. Topologically, residues 1413–1423 are extracellular; sequence ETDDQSPAKED. Residues 1424–1442 form a helical membrane-spanning segment; the sequence is FLFKVNVAFIVVFTGECTL. The Cytoplasmic portion of the chain corresponds to 1443 to 1454; it reads KLFALRHYFFTN. The helical transmembrane segment at 1455-1472 threads the bilayer; that stretch reads GWNIFDFIVVILSIAGTM. Over 1473–1485 the chain is Extracellular; it reads LSDIIEKYFVSPT. A helical transmembrane segment spans residues 1486-1502; that stretch reads LFRVIRLARIGRILRLI. Topologically, residues 1503 to 1521 are cytoplasmic; the sequence is KGARGIRTLLFALMMSLPA. The helical transmembrane segment at 1522-1539 threads the bilayer; the sequence is LFNIGLLLFLIMFIFSIF. Residues 1540-1561 are Extracellular-facing; sequence GMSNFAYVKKEAGINDMFNFET. An intramembrane region (pore-forming) is located at residues 1562 to 1584; that stretch reads FGSSIICLFQITTSAGWDTLLLP. At 1585–1614 the chain is on the extracellular side; sequence MLNKEPPDCDPAFENPGTDVKGNCGNPMMG. The cysteines at positions 1593 and 1608 are disulfide-linked. The chain crosses the membrane as a helical span at residues 1615–1637; that stretch reads MVFFCSYIIISFLVVVNMYIAII. At 1638–1892 the chain is on the cytoplasmic side; the sequence is LENFNVAQEE…TQTILRETNV (255 aa). Residues 1767–1796 enclose the IQ domain; it reads EDMAAVVIQRAYRNHLHKRGIHHAAYIQRS. Residues 1836 to 1856 form a disordered region; sequence RRRPDPQTRCSGARCSPEPPE.

The protein belongs to the sodium channel (TC 1.A.1.10) family. Nav1.4/SCN4A subfamily. As to quaternary structure, voltage-gated sodium (Nav) channels consist of an ion-conducting alpha subunit which is functional on its own associated with regulatory beta subunits.

Its subcellular location is the cell membrane. The enzyme catalyses Na(+)(in) = Na(+)(out). Its function is as follows. Pore-forming subunit of a voltage-gated sodium (Nav) channel that directly mediates the depolarizing phase of action potentials in excitable membranes. Navs, also called VGSCs (voltage-gated sodium channels) or VDSCs (voltage-dependent sodium channels), operate by switching between closed and open conformations depending on the voltage difference across the membrane. In the open conformation they allow Na(+) ions to selectively pass through the pore, along their electrochemical gradient. The influx of Na+ ions provokes membrane depolarization, initiating the propagation of electrical signals throughout cells and tissues. This Takifugu rubripes (Japanese pufferfish) protein is Sodium channel protein type 4 subunit alpha A (scn4aa).